Reading from the N-terminus, the 85-residue chain is Putative septation protein SpoVG (85 aa).

Belongs to the SpoVG family.

Its function is as follows. Could be involved in septation. The sequence is that of Putative septation protein SpoVG from Archaeoglobus fulgidus (strain ATCC 49558 / DSM 4304 / JCM 9628 / NBRC 100126 / VC-16).